A 217-amino-acid polypeptide reads, in one-letter code: Translation initiation factor IF-3 (217 aa).

A disordered region spans residues 170–217; it reads KKTEAMAEARQAQEARKADAKANPGKSQNAAETDDAEAEAPAEAPAEA. Over residues 172-189 the composition is skewed to basic and acidic residues; the sequence is TEAMAEARQAQEARKADA.

This sequence belongs to the IF-3 family. As to quaternary structure, monomer.

It is found in the cytoplasm. Functionally, IF-3 binds to the 30S ribosomal subunit and shifts the equilibrium between 70S ribosomes and their 50S and 30S subunits in favor of the free subunits, thus enhancing the availability of 30S subunits on which protein synthesis initiation begins. The sequence is that of Translation initiation factor IF-3 from Streptomyces coelicolor (strain ATCC BAA-471 / A3(2) / M145).